The following is a 508-amino-acid chain: Abl interactor 1 (508 aa).

N-acetylalanine is present on Ala2. Residues 18 to 79 (ALIESYQNLT…NNVLQLLDIQ (62 aa)) form a required for binding to WASF1 region. Residues 45-107 (KALEETKAYT…DIHKEKVARR (63 aa)) enclose the t-SNARE coiled-coil homology domain. Phosphotyrosine is present on Tyr53. Disordered regions lie at residues 159–290 (KHGN…APPL), 306–375 (APGS…LTPQ), and 388–421 (NIADSPTPPPPPPPDDIPMFDDSPPPPPPPPVDY). A compositionally biased stretch (polar residues) spans 161–175 (GNNQPARTGTLSRTN). Phosphothreonine occurs at positions 174 and 178. 2 positions are modified to phosphoserine: Ser183 and Ser187. The residue at position 213 (Tyr213) is a Phosphotyrosine; by ABL1. Phosphothreonine is present on Thr215. Phosphoserine is present on residues Ser216, Ser222, and Ser225. The span at 222–235 (SQHSPGRTASLNQR) shows a compositional bias: polar residues. Residues 248–258 (SRENSGSSSIG) are compositionally biased toward low complexity. Pro residues predominate over residues 278-290 (VPPPSGAPPAPPL). A compositionally biased stretch (polar residues) spans 307-322 (PGSQYGTMTRQISRHN). A phosphoserine mark is found at Ser319 and Ser323. Positions 337–347 (PSVTAQFSAQP) are enriched in polar residues. 2 stretches are compositionally biased toward pro residues: residues 393 to 403 (PTPPPPPPPDD) and 410 to 419 (SPPPPPPPPV). Residues 446–505 (NYIEKVVAIYDYTKDKDDELSFMEGAIIYVIKKNDDGWYEGVCNRVTGLFPGNYVESIMH) form the SH3 domain. Tyr455 bears the Phosphotyrosine mark. Ser466 is modified (phosphoserine). Phosphothreonine is present on Thr507.

It belongs to the ABI family. Interacts with ABL1, ENAH, STX1A, SNAP25, VAMP2, EPS8, and through its N-terminus with WASF1. Part of a complex consisting of ABI1, STX1A and SNAP25. Part of a complex consisting of ABI1, EPS8 and SOS1. Interacts with SOS1, SOS2, GRB2, SPTA1 and the first SH3 domain of NCK1. Isoform 6 does not interact with NCK1. Component of the WAVE2 complex composed of ABI1, CYFIP1/SRA1, NCKAP1/NAP1 (NCKAP1l/HEM1 in hematopoietic cells) and WASF2/WAVE2. Interacts (via SH3 domain) with SHANK2 and SHANK3, but not SHANK1; the interaction is direct. Interacts with the heterodimer MYC:MAX; the interaction may enhance MYC:MAX transcriptional activity. Interacts with FNBP1L (via the SH3 domain), WASF2, and CDC42, but only in the presence of FNBP1L. As to quaternary structure, (Microbial infection) Interacts with human cytomegalovirus/HHV-5 protein UL135. Phosphorylated on tyrosine residues after serum stimulation or induction by v-Abl. Seems to be phosphorylated at Tyr-53 by ABL1, required for nuclear but not for synaptic localization. Widely expressed, with highest expression in brain.

Its subcellular location is the cytoplasm. It is found in the nucleus. The protein resides in the cell projection. The protein localises to the lamellipodium. It localises to the filopodium. Its subcellular location is the growth cone. It is found in the postsynaptic density. The protein resides in the cytoskeleton. Functionally, may act in negative regulation of cell growth and transformation by interacting with nonreceptor tyrosine kinases ABL1 and/or ABL2. May play a role in regulation of EGF-induced Erk pathway activation. Involved in cytoskeletal reorganization and EGFR signaling. Together with EPS8 participates in transduction of signals from Ras to Rac. In vitro, a trimeric complex of ABI1, EPS8 and SOS1 exhibits Rac specific guanine nucleotide exchange factor (GEF) activity and ABI1 seems to act as an adapter in the complex. Regulates ABL1/c-Abl-mediated phosphorylation of ENAH. Recruits WASF1 to lamellipodia and there seems to regulate WASF1 protein level. In brain, seems to regulate the dendritic outgrowth and branching as well as to determine the shape and number of synaptic contacts of developing neurons. The chain is Abl interactor 1 from Homo sapiens (Human).